The following is a 297-amino-acid chain: Polyamine aminopropyltransferase 2 (297 aa).

In terms of domain architecture, PABS spans 26–258 (FYWEPDVEGG…DLWTFFVALK (233 aa)). S-methyl-5'-thioadenosine is bound at residue Gln-53. The spermidine site is built by His-84 and Glu-108. Residues Asp-128 and 157–158 (DV) each bind S-methyl-5'-thioadenosine. The active-site Proton acceptor is the Asp-176. An S-methyl-5'-thioadenosine-binding site is contributed by Pro-184.

This sequence belongs to the spermidine/spermine synthase family. As to quaternary structure, homodimer or homotetramer.

It is found in the cytoplasm. It catalyses the reaction S-adenosyl 3-(methylsulfanyl)propylamine + putrescine = S-methyl-5'-thioadenosine + spermidine + H(+). It functions in the pathway amine and polyamine biosynthesis; spermidine biosynthesis; spermidine from putrescine: step 1/1. Its function is as follows. Catalyzes the irreversible transfer of a propylamine group from the amino donor S-adenosylmethioninamine (decarboxy-AdoMet) to putrescine (1,4-diaminobutane) to yield spermidine. The polypeptide is Polyamine aminopropyltransferase 2 (Caldanaerobacter subterraneus subsp. tengcongensis (strain DSM 15242 / JCM 11007 / NBRC 100824 / MB4) (Thermoanaerobacter tengcongensis)).